The following is an 83-amino-acid chain: Prolactin-releasing peptide (83 aa).

Residues 1–21 (MALKTWLLCLLLLSLVLPGAS) form the signal peptide. Position 52 is a phenylalanine amide (F52). The propeptide occupies 57 to 83 (ATPRDVTGLGQLSCLPLDGRTKFSQRG).

As to expression, widely expressed, with highest levels in medulla oblongata and hypothalamus.

Its subcellular location is the secreted. Functionally, stimulates prolactin (PRL) release and regulates the expression of prolactin through its receptor GPR10. May stimulate lactotrophs directly to secrete PRL. The sequence is that of Prolactin-releasing peptide (Prlh) from Rattus norvegicus (Rat).